A 422-amino-acid polypeptide reads, in one-letter code: S-adenosylmethionine synthase (422 aa).

ATP is bound at residue histidine 15. Position 17 (aspartate 17) interacts with Mg(2+). Glutamate 43 lines the K(+) pocket. The L-methionine site is built by glutamate 56 and glutamine 99. The segment at 99–109 is flexible loop; that stretch reads QSPDISRGVTE. ATP is bound by residues 166–168, 232–233, aspartate 241, 247–248, alanine 264, and lysine 268; these read DGK, RF, and RK. Aspartate 241 is a binding site for L-methionine. Lysine 272 contacts L-methionine. Residues 390-422 form a disordered region; sequence AVPATTNGAGSKNGSGSKKEPKRKGKKETGAQA.

Belongs to the AdoMet synthase family. As to quaternary structure, homotetramer; dimer of dimers. It depends on Mg(2+) as a cofactor. Requires K(+) as cofactor.

It localises to the cytoplasm. It catalyses the reaction L-methionine + ATP + H2O = S-adenosyl-L-methionine + phosphate + diphosphate. It participates in amino-acid biosynthesis; S-adenosyl-L-methionine biosynthesis; S-adenosyl-L-methionine from L-methionine: step 1/1. Catalyzes the formation of S-adenosylmethionine (AdoMet) from methionine and ATP. The overall synthetic reaction is composed of two sequential steps, AdoMet formation and the subsequent tripolyphosphate hydrolysis which occurs prior to release of AdoMet from the enzyme. This Sorangium cellulosum (strain So ce56) (Polyangium cellulosum (strain So ce56)) protein is S-adenosylmethionine synthase.